Reading from the N-terminus, the 340-residue chain is Pseudaminic acid synthase (340 aa).

The AFP-like domain maps to 281-337 (SLFVIKDIQKGEALTENNIKALRPNLGLHPKFYKEILGQKASKFLKANTPLSADDIE).

This sequence belongs to the pseudaminic acid synthase family. A divalent metal cation serves as cofactor.

It carries out the reaction 2,4-diacetamido-2,4,6-trideoxy-beta-L-altrose + phosphoenolpyruvate + H2O = pseudaminate + phosphate. Functionally, catalyzes the fifth step in the biosynthesis of pseudaminic acid, a sialic-acid-like sugar that is used to modify flagellin. Catalyzes the condensation of phosphoenolpyruvate with 2,4-diacetamido-2,4,6-trideoxy-beta-l-altropyranose, forming pseudaminic acid. The protein is Pseudaminic acid synthase (pseI) of Helicobacter pylori (strain ATCC 700392 / 26695) (Campylobacter pylori).